Consider the following 492-residue polypeptide: MDPYKYRPSSSFNAPMWSTNSGAPVWNNDNSLTVGSRGPILLEDYHLVEKIADFDRERIPERVVHARGATAKGFFEVTHDVSHLTCADFLRAPGVQTPVIVRFSTVIHERGSPETLRDPRGFAIKFYTREGNWDLVGNNFPVFFIRDGMKFPDMVHALKPNPKTHIQENWRILDFFSHHPESLHMFTFLFDDIGVPADYRHMDGSGVNTYTLVNRAGKAHYVKFHWKPTCGVKSLLEEEAVTVGGTNHSHATKDLTDSIAAGNYPEWTFYIQTIDPDYEERFDFDPLDVTKTWPEDVVPLQPVGRLVLNRNIDNFFSENEQLAFCPGIIVPGVYYSDDKLLQTRIFSYSDTQRHRLGPNYLLLPANAPKCSHHNNHYDGLMNFMHRDEEVDYFPSRFDPAKHAPRYPIPSRTLNGRREKMVIEKENNFKQPGERYRSMDPARQERFINRWIDALSDPRLTHEIKAIWLSYWSQADKSLGQKLASRLSSKPSM.

Active-site residues include His65 and Asn138. Tyr348 contacts heme.

This sequence belongs to the catalase family. Homotetramer. Requires heme as cofactor.

The protein resides in the peroxisome. It is found in the glyoxysome. The enzyme catalyses 2 H2O2 = O2 + 2 H2O. Its function is as follows. Occurs in almost all aerobically respiring organisms and serves to protect cells from the toxic effects of hydrogen peroxide. This chain is Catalase-1 (CAT1), found in Triticum aestivum (Wheat).